Reading from the N-terminus, the 119-residue chain is C-C motif chemokine 24 (119 aa).

The signal sequence occupies residues 1-26 (MAGSATIVAGLLLLVACACCIFPIDS). Disulfide bonds link Cys33/Cys58 and Cys34/Cys74. N-linked (GlcNAc...) asparagine glycosylation is found at Asn54 and Asn115. The disordered stretch occupies residues 96-119 (PSKGAKAVRTKFAVQRRRGNSTEV). The span at 101 to 119 (KAVRTKFAVQRRRGNSTEV) shows a compositional bias: basic residues.

It belongs to the intercrine beta (chemokine CC) family. In terms of tissue distribution, highest expression in jejunum and spleen. Lower levels found in liver and lung. No expression detected in kidney, thymus, brain or testis.

It is found in the secreted. Functionally, chemotactic for resting T-lymphocytes, and eosinophils. Has lower chemotactic activity for neutrophils but none for monocytes and activated lymphocytes. Is a strong suppressor of colony formation by a multipotential hematopoietic progenitor cell line. Binds to CCR3. The chain is C-C motif chemokine 24 from Mus musculus (Mouse).